A 451-amino-acid polypeptide reads, in one-letter code: F-box only protein 47 (451 aa).

The region spanning 41-91 (LGNFKVLPLEILHIILRYLSVKDIGMLSMVSKTVSQHIINYISTSSGSRRL) is the F-box domain.

In terms of assembly, part of a SCF (SKP1-cullin-F-box) protein ligase complex.

Functionally, probably recognizes and binds to some phosphorylated proteins and promotes their ubiquitination and degradation. This chain is F-box only protein 47 (Fbxo47), found in Mus musculus (Mouse).